We begin with the raw amino-acid sequence, 149 residues long: SsrA-binding protein (149 aa).

It belongs to the SmpB family.

It is found in the cytoplasm. Its function is as follows. Required for rescue of stalled ribosomes mediated by trans-translation. Binds to transfer-messenger RNA (tmRNA), required for stable association of tmRNA with ribosomes. tmRNA and SmpB together mimic tRNA shape, replacing the anticodon stem-loop with SmpB. tmRNA is encoded by the ssrA gene; the 2 termini fold to resemble tRNA(Ala) and it encodes a 'tag peptide', a short internal open reading frame. During trans-translation Ala-aminoacylated tmRNA acts like a tRNA, entering the A-site of stalled ribosomes, displacing the stalled mRNA. The ribosome then switches to translate the ORF on the tmRNA; the nascent peptide is terminated with the 'tag peptide' encoded by the tmRNA and targeted for degradation. The ribosome is freed to recommence translation, which seems to be the essential function of trans-translation. The chain is SsrA-binding protein from Wolbachia sp. subsp. Brugia malayi (strain TRS).